A 397-amino-acid polypeptide reads, in one-letter code: Acetate kinase (397 aa).

N7 contacts Mg(2+). K14 provides a ligand contact to ATP. A substrate-binding site is contributed by R91. D148 functions as the Proton donor/acceptor in the catalytic mechanism. ATP contacts are provided by residues 208–212 (HLGNG), 283–285 (DLR), and 331–335 (GVGEN). Position 384 (E384) interacts with Mg(2+).

This sequence belongs to the acetokinase family. In terms of assembly, homodimer. Mg(2+) is required as a cofactor. Mn(2+) serves as cofactor.

The protein resides in the cytoplasm. The enzyme catalyses acetate + ATP = acetyl phosphate + ADP. Its pathway is metabolic intermediate biosynthesis; acetyl-CoA biosynthesis; acetyl-CoA from acetate: step 1/2. Functionally, catalyzes the formation of acetyl phosphate from acetate and ATP. Can also catalyze the reverse reaction. The sequence is that of Acetate kinase from Syntrophomonas wolfei subsp. wolfei (strain DSM 2245B / Goettingen).